The sequence spans 277 residues: Uracil phosphoribosyltransferase homolog (277 aa).

The tract at residues 1-69 (MEAMPCHNQR…AAAPSPAAED (69 aa)) is disordered. Over residues 37–69 (AEPSEGSSSGSPSPDSSSGSNGAAAAPSPAAED) the composition is skewed to low complexity. GTP-binding positions include arginine 101, arginine 110, and 144–147 (EKGN). Arginine 154 serves as a coordination point for 5-phospho-alpha-D-ribose 1-diphosphate. Residues arginine 171 and arginine 200 each contribute to the GTP site. Residue 206-214 (YPILSTGNT) participates in 5-phospho-alpha-D-ribose 1-diphosphate binding. Uracil is bound at residue 267–269 (THF).

It belongs to the UPRTase family.

The protein resides in the cytoplasm. It localises to the nucleus. The protein is Uracil phosphoribosyltransferase homolog (UPRT) of Gallus gallus (Chicken).